Here is a 133-residue protein sequence, read N- to C-terminus: Alcohol dehydrogenase, 15 kDa subunit (133 aa).

An N-terminal signal peptide occupies residues 1–24 (MFRRIVPVLGLALGLGLASQAAMA). Residues 23 to 43 (MAQEQSPPPPPAVQGTPGKDF) are disordered. Residue Q25 is modified to Pyrrolidone carboxylic acid.

As to quaternary structure, the alcohol dehydrogenase multicomponent enzyme system is composed of a dehydrogenase subunit I (AdhA), a cytochrome c subunit II (AdhB) and a subunit III (AdhS).

The protein localises to the cell membrane. Functionally, part of the alcohol dehydrogenase multicomponent enzyme system which is involved in the production of acetic acid and in the ethanol oxidase respiratory chain. Does not play an obligatory role for the alcohol dehydrogenase (ADH) activity. The sequence is that of Alcohol dehydrogenase, 15 kDa subunit from Gluconobacter oxydans (strain 621H) (Gluconobacter suboxydans).